The primary structure comprises 149 residues: Large ribosomal subunit protein eL24B (149 aa).

Ser-50 bears the Phosphoserine mark. The tract at residues 96–149 (QRPEVRAAARAAALKQRKDKRAASESEKKAIKAKSAASSARGQAIKNAKVAARR) is disordered. Basic and acidic residues predominate over residues 116 to 125 (RAASESEKKA).

This sequence belongs to the eukaryotic ribosomal protein eL24 family. As to quaternary structure, component of the large ribosomal subunit (LSU). Mature yeast ribosomes consist of a small (40S) and a large (60S) subunit. The 40S small subunit contains 1 molecule of ribosomal RNA (18S rRNA) and at least 33 different proteins. The large 60S subunit contains 3 rRNA molecules (25S, 5.8S and 5S rRNA) and at least 46 different proteins.

It is found in the cytoplasm. Functionally, component of the ribosome, a large ribonucleoprotein complex responsible for the synthesis of proteins in the cell. The small ribosomal subunit (SSU) binds messenger RNAs (mRNAs) and translates the encoded message by selecting cognate aminoacyl-transfer RNA (tRNA) molecules. The large subunit (LSU) contains the ribosomal catalytic site termed the peptidyl transferase center (PTC), which catalyzes the formation of peptide bonds, thereby polymerizing the amino acids delivered by tRNAs into a polypeptide chain. The nascent polypeptides leave the ribosome through a tunnel in the LSU and interact with protein factors that function in enzymatic processing, targeting, and the membrane insertion of nascent chains at the exit of the ribosomal tunnel. The sequence is that of Large ribosomal subunit protein eL24B (rpl2402) from Schizosaccharomyces pombe (strain 972 / ATCC 24843) (Fission yeast).